Consider the following 91-residue polypeptide: Small ribosomal subunit protein bS18 (91 aa).

It belongs to the bacterial ribosomal protein bS18 family. In terms of assembly, part of the 30S ribosomal subunit. Forms a tight heterodimer with protein bS6.

Binds as a heterodimer with protein bS6 to the central domain of the 16S rRNA, where it helps stabilize the platform of the 30S subunit. This is Small ribosomal subunit protein bS18 from Thiobacillus denitrificans (strain ATCC 25259 / T1).